The following is a 105-amino-acid chain: Protamine-2 (105 aa).

The interval 1–74 (MVRYRMRSPS…RRSCRRRRRH (74 aa)) is disordered. 3 positions are modified to phosphoserine: Ser8, Ser10, and Ser33. Residues 33–42 (SPERVEDYGR) show a composition bias toward basic and acidic residues. Positions 43–74 (THRGHHRHRRCSRKRLHRIHKRRRSCRRRRRH) are enriched in basic residues.

The protein belongs to the protamine P2 family. Interacts with TDRP. Proteolytic processing into mature chains is required for histone eviction during spermatogenesis. Transition proteins (TNP1 and TNP2) are required for processing. As to expression, testis.

Its subcellular location is the nucleus. It localises to the chromosome. Functionally, protamines substitute for histones in the chromatin of sperm during the haploid phase of spermatogenesis. They compact sperm DNA into a highly condensed, stable and inactive complex. The chain is Protamine-2 (Prm2) from Rattus fuscipes (Bush rat).